Reading from the N-terminus, the 158-residue chain is MNVVQGNIEAKNAKVAIVISRFNSFLVESLLEGALDTLKRFGQVSDENITVVRVPGAVELPLAARRVAASGKFDGIIALGAVIRGGTPHFDFVAGECNKGLAQIALEFDLPVAFGVLTTDTIEQAIERSGTKAGNKGGEAALSLLEMVNVLQQLEQQL.

5-amino-6-(D-ribitylamino)uracil contacts are provided by residues phenylalanine 22, 57–59, and 81–83; these read AVE and AVI. 86–87 lines the (2S)-2-hydroxy-3-oxobutyl phosphate pocket; that stretch reads GT. Histidine 89 serves as the catalytic Proton donor. Phenylalanine 114 contacts 5-amino-6-(D-ribitylamino)uracil. Residue arginine 128 participates in (2S)-2-hydroxy-3-oxobutyl phosphate binding.

This sequence belongs to the DMRL synthase family. In terms of assembly, forms an icosahedral capsid composed of 60 subunits, arranged as a dodecamer of pentamers.

It carries out the reaction (2S)-2-hydroxy-3-oxobutyl phosphate + 5-amino-6-(D-ribitylamino)uracil = 6,7-dimethyl-8-(1-D-ribityl)lumazine + phosphate + 2 H2O + H(+). The protein operates within cofactor biosynthesis; riboflavin biosynthesis; riboflavin from 2-hydroxy-3-oxobutyl phosphate and 5-amino-6-(D-ribitylamino)uracil: step 1/2. Catalyzes the formation of 6,7-dimethyl-8-ribityllumazine by condensation of 5-amino-6-(D-ribitylamino)uracil with 3,4-dihydroxy-2-butanone 4-phosphate. This is the penultimate step in the biosynthesis of riboflavin. The chain is 6,7-dimethyl-8-ribityllumazine synthase from Shewanella oneidensis (strain ATCC 700550 / JCM 31522 / CIP 106686 / LMG 19005 / NCIMB 14063 / MR-1).